The following is a 200-amino-acid chain: Protein Syd (200 aa).

This sequence belongs to the Syd family.

The protein localises to the cell inner membrane. Its function is as follows. Interacts with the SecY protein in vivo. May bind preferentially to an uncomplexed state of SecY, thus functioning either as a chelating agent for excess SecY in the cell or as a regulatory factor that negatively controls the translocase function. The chain is Protein Syd from Colwellia psychrerythraea (strain 34H / ATCC BAA-681) (Vibrio psychroerythus).